We begin with the raw amino-acid sequence, 160 residues long: Endoribonuclease YbeY (160 aa).

Zn(2+) is bound by residues His123, His127, and His133.

The protein belongs to the endoribonuclease YbeY family. It depends on Zn(2+) as a cofactor.

It localises to the cytoplasm. Functionally, single strand-specific metallo-endoribonuclease involved in late-stage 70S ribosome quality control and in maturation of the 3' terminus of the 16S rRNA. The protein is Endoribonuclease YbeY of Roseiflexus sp. (strain RS-1).